The primary structure comprises 436 residues: Enolase (436 aa).

Position 167 (Gln167) interacts with (2R)-2-phosphoglycerate. Glu209 acts as the Proton donor in catalysis. Residues Asp246, Glu291, and Asp318 each contribute to the Mg(2+) site. Residues Lys343, Arg372, Ser373, and Lys394 each coordinate (2R)-2-phosphoglycerate. The active-site Proton acceptor is the Lys343.

The protein belongs to the enolase family. In terms of assembly, component of the RNA degradosome, a multiprotein complex involved in RNA processing and mRNA degradation. The cofactor is Mg(2+).

The protein localises to the cytoplasm. The protein resides in the secreted. It is found in the cell surface. The enzyme catalyses (2R)-2-phosphoglycerate = phosphoenolpyruvate + H2O. It participates in carbohydrate degradation; glycolysis; pyruvate from D-glyceraldehyde 3-phosphate: step 4/5. Its function is as follows. Catalyzes the reversible conversion of 2-phosphoglycerate (2-PG) into phosphoenolpyruvate (PEP). It is essential for the degradation of carbohydrates via glycolysis. This Actinobacillus pleuropneumoniae serotype 5b (strain L20) protein is Enolase.